A 344-amino-acid polypeptide reads, in one-letter code: Putative esterase NocK (344 aa).

Residues 1-34 (MIGVTRRSGLALAVLVSSAACAGAEPVAPPPAPA) constitute a signal peptide (tat-type signal). Residues 265-295 (GGADERRREEARPAAAPGGTSTSRETCANPD) form a disordered region. Positions 266–276 (GADERRREEAR) are enriched in basic and acidic residues.

It belongs to the AB hydrolase superfamily. Predicted to be exported by the Tat system. The position of the signal peptide cleavage has not been experimentally proven.

This is Putative esterase NocK from Nocardia uniformis subsp. tsuyamanensis.